Here is a 71-residue protein sequence, read N- to C-terminus: Conotoxin Tx11.3 (71 aa).

Residues 1-19 (MKLCVTFLLVLVILPSVTG) form the signal peptide. Residues 20-47 (VKSSERTLSGAALRGDRGTCSGRGQECK) constitute a propeptide that is removed on maturation. Disulfide bonds link cysteine 39-cysteine 53, cysteine 46-cysteine 58, cysteine 52-cysteine 63, and cysteine 57-cysteine 70.

This sequence belongs to the I1 superfamily. In terms of tissue distribution, expressed by the venom duct.

The protein resides in the secreted. The polypeptide is Conotoxin Tx11.3 (Conus textile (Cloth-of-gold cone)).